A 288-amino-acid polypeptide reads, in one-letter code: Alpha/beta hydrolase domain-containing protein 17B (288 aa).

Residues Ser-170, Asp-235, and His-264 each act as charge relay system in the active site. The residue at position 282 (Ser-282) is a Phosphoserine.

Belongs to the AB hydrolase superfamily. ABHD17 family. Palmitoylated on cysteine residues located in a cysteine cluster at the N-terminus which promotes membrane localization. Palmitoylation is required for post-synaptic localization and for depalmitoylating activity towards DLG4/PSD95. As to expression, expressed in brain.

The protein resides in the cell membrane. It is found in the recycling endosome membrane. Its subcellular location is the cell projection. It localises to the dendritic spine. The protein localises to the postsynaptic density membrane. The enzyme catalyses S-hexadecanoyl-L-cysteinyl-[protein] + H2O = L-cysteinyl-[protein] + hexadecanoate + H(+). In terms of biological role, hydrolyzes fatty acids from S-acylated cysteine residues in proteins. Has depalmitoylating activity towards DLG4/PSD95. Has depalmitoylating activity towards GAP43. Has depalmitoylating activity towards MAP6. Has depalmitoylating activity towards NRAS. The chain is Alpha/beta hydrolase domain-containing protein 17B from Mus musculus (Mouse).